Reading from the N-terminus, the 215-residue chain is 3-isopropylmalate dehydratase small subunit (215 aa).

This sequence belongs to the LeuD family. LeuD type 1 subfamily. Heterodimer of LeuC and LeuD.

The enzyme catalyses (2R,3S)-3-isopropylmalate = (2S)-2-isopropylmalate. It participates in amino-acid biosynthesis; L-leucine biosynthesis; L-leucine from 3-methyl-2-oxobutanoate: step 2/4. Functionally, catalyzes the isomerization between 2-isopropylmalate and 3-isopropylmalate, via the formation of 2-isopropylmaleate. The polypeptide is 3-isopropylmalate dehydratase small subunit (Xanthomonas euvesicatoria pv. vesicatoria (strain 85-10) (Xanthomonas campestris pv. vesicatoria)).